The sequence spans 455 residues: Adhesin YadA (455 aa).

The first 25 residues, 1 to 25 (MTKDFKISVSAALISALFSSPYAFA), serve as a signal peptide directing secretion. The surface exposed passenger domain stretch occupies residues 26–363 (DDYDGIPNLT…KKAIRESNQY (338 aa)). Positions 209 to 243 (VNVAQLKKEIEKTQENTNKRSAELLANANAYADNK) form a coiled coil. The outer membrane translocation of the passenger domain stretch occupies residues 364–402 (TDHKFRQLDNRLDKLDTRVDKGLASSAALNSLFQPYGVG). 4 beta stranded membrane passes run 402–412 (GKVNFTAGVGG), 416–427 (SQALAIGSGYRV), 434–440 (KAGVAYA), and 444–455 (DVMYNASFNIEW). The translocator domain stretch occupies residues 403 to 455 (KVNFTAGVGGYRSSQALAIGSGYRVNENVALKAGVAYAGSSDVMYNASFNIEW).

The protein belongs to the autotransporter-2 (AT-2) (TC 1.B.40) family. In terms of assembly, homotrimer; in gels migrates as monomers, dimers and homotrimers. Does not form trimers with distantly related EibA from E.coli; coexpression was lethal and one of the genes is eliminated in vivo. If the full translocator domain (368-455) is exchanged with that of EibA ('299-392'), will form heterotrimers with EibA and vice-versa.

It is found in the cell surface. The protein localises to the cell outer membrane. Functionally, collagen-binding outer membrane protein forming a fibrillar matrix on the bacterial cell surface. Promotes initial attachment and invasion of eukaryotic cells. Also protects the bacteria by being responsible for agglutination, serum resistance, complement inactivation and phagocytosis resistance. This is Adhesin YadA (yadA) from Yersinia enterocolitica.